A 381-amino-acid chain; its full sequence is Succinate--CoA ligase [ADP-forming] subunit beta (381 aa).

An ATP-grasp domain is found at Lys-9 to Asp-236. ATP contacts are provided by residues Lys-45, Gly-52–Gly-54, Ala-94, and Glu-99. Mg(2+) contacts are provided by Asn-191 and Asp-205. Residues Asn-256 and Gly-313–Thr-315 each bind substrate.

This sequence belongs to the succinate/malate CoA ligase beta subunit family. In terms of assembly, heterotetramer of two alpha and two beta subunits. Mg(2+) is required as a cofactor.

It carries out the reaction succinate + ATP + CoA = succinyl-CoA + ADP + phosphate. The catalysed reaction is GTP + succinate + CoA = succinyl-CoA + GDP + phosphate. It participates in carbohydrate metabolism; tricarboxylic acid cycle; succinate from succinyl-CoA (ligase route): step 1/1. In terms of biological role, succinyl-CoA synthetase functions in the citric acid cycle (TCA), coupling the hydrolysis of succinyl-CoA to the synthesis of either ATP or GTP and thus represents the only step of substrate-level phosphorylation in the TCA. The beta subunit provides nucleotide specificity of the enzyme and binds the substrate succinate, while the binding sites for coenzyme A and phosphate are found in the alpha subunit. In Gemmatimonas aurantiaca (strain DSM 14586 / JCM 11422 / NBRC 100505 / T-27), this protein is Succinate--CoA ligase [ADP-forming] subunit beta.